The sequence spans 352 residues: Rhodopsin, deep-sea form (352 aa).

Topologically, residues 1–36 are extracellular; the sequence is MNGTEGPNFYIPMSNITGVVRSPFEYPQYYLAEPWA. N-linked (GlcNAc...) asparagine glycans are attached at residues Asn-2 and Asn-15. A helical transmembrane segment spans residues 37–61; the sequence is YTILAAYMFTLILLGFPVNFLTLYV. At 62–73 the chain is on the cytoplasmic side; it reads TIEHKKLRTPLN. The helical transmembrane segment at 74-98 threads the bilayer; that stretch reads YILLNLAVANLFMVFGGFTTTVYTS. The Extracellular segment spans residues 99–113; it reads MHGYFVFGETGCNLE. A disulfide bond links Cys-110 and Cys-187. The chain crosses the membrane as a helical span at residues 114–133; that stretch reads GYFATLGGEISLWSLVVLAI. Residues 134–152 lie on the Cytoplasmic side of the membrane; it reads ERWVVVCKPMSNFRFGENH. The helical transmembrane segment at 153–176 threads the bilayer; sequence AIMGLAFTWIMANSCAMPPLFGWS. Topologically, residues 177-202 are extracellular; the sequence is RYIPEGMQCSCGVDYYTLKPEVNNES. Asn-200 carries an N-linked (GlcNAc...) asparagine glycan. A helical transmembrane segment spans residues 203–230; the sequence is FVIYMFIVHFSVPLTIISFCYGRLVCTV. Residues 231-252 lie on the Cytoplasmic side of the membrane; that stretch reads KEAAAQQQESETTQRAEREVTR. Residues 253–276 traverse the membrane as a helical segment; it reads MVVIMVIAFLVCWVPYASVAWYIF. At 277–284 the chain is on the extracellular side; that stretch reads THQGSTFG. The helical transmembrane segment at 285 to 309 threads the bilayer; that stretch reads PVFMTVPSFFAKSSAIYNPLIYICL. Lys-296 is subject to N6-(retinylidene)lysine. Over 310–352 the chain is Cytoplasmic; sequence NSQFRNCMITTLFCGKNPFQEEEGASTTASKTEASSVSSVSPA. Cys-323 is lipidated: S-palmitoyl cysteine. The segment at 333–352 is disordered; that stretch reads GASTTASKTEASSVSSVSPA. A compositionally biased stretch (low complexity) spans 334–352; sequence ASTTASKTEASSVSSVSPA.

It belongs to the G-protein coupled receptor 1 family. Opsin subfamily. In terms of processing, phosphorylated on some or all of the serine and threonine residues present in the C-terminal region. In terms of tissue distribution, rod shaped photoreceptor cells which mediates vision in dim light.

The protein resides in the membrane. Functionally, visual pigments such as rhodopsin and porphyropsin are light-absorbing molecules that mediate vision. Rhodopsin consists of an apoprotein, opsin, covalently linked to 11-cis-retinal. This receptor is coupled to the activation of phospholipase C. Porphyropsin consists of opsin covalently linked to 11-cis 3,4-didehydroretinal. In Anguilla anguilla (European freshwater eel), this protein is Rhodopsin, deep-sea form.